The sequence spans 382 residues: tRNA-specific 2-thiouridylase MnmA (382 aa).

Residues 34-41 (AMSGGVDS) and L60 each bind ATP. C128 acts as the Nucleophile in catalysis. A disulfide bond links C128 and C224. G152 contacts ATP. Positions 174 to 176 (RDQ) are interaction with tRNA. C224 serves as the catalytic Cysteine persulfide intermediate.

This sequence belongs to the MnmA/TRMU family.

It is found in the cytoplasm. The catalysed reaction is S-sulfanyl-L-cysteinyl-[protein] + uridine(34) in tRNA + AH2 + ATP = 2-thiouridine(34) in tRNA + L-cysteinyl-[protein] + A + AMP + diphosphate + H(+). Catalyzes the 2-thiolation of uridine at the wobble position (U34) of tRNA, leading to the formation of s(2)U34. This is tRNA-specific 2-thiouridylase MnmA from Sphingopyxis alaskensis (strain DSM 13593 / LMG 18877 / RB2256) (Sphingomonas alaskensis).